Reading from the N-terminus, the 118-residue chain is Basic phospholipase A2 CM-II (118 aa).

7 disulfide bridges follow: C11/C70, C26/C117, C28/C44, C43/C98, C50/C91, C59/C84, and C77/C89. Y27, G29, and G31 together coordinate Ca(2+). Residue H47 is part of the active site. D48 contributes to the Ca(2+) binding site. D92 is a catalytic residue.

Belongs to the phospholipase A2 family. Group I subfamily. D49 sub-subfamily. It depends on Ca(2+) as a cofactor. Expressed by the venom gland.

The protein resides in the secreted. The catalysed reaction is a 1,2-diacyl-sn-glycero-3-phosphocholine + H2O = a 1-acyl-sn-glycero-3-phosphocholine + a fatty acid + H(+). Its function is as follows. Snake venom phospholipase A2 (PLA2) that causes myonecrosis when injected intramuscularly, causes neuromuscular blockade with a gradual contracture and a decreased sensitivity to ACh and KCl (in the chick biventer cervicis nerve-muscle preparation), abolishes twitches evoked by indirect stimulation earlier than those by direct stimulation (in the mouse phrenic nerve-diaphragm preparation), shows indirect hemolytic activity, and shows weak anticoagulant activity. PLA2 catalyzes the calcium-dependent hydrolysis of the 2-acyl groups in 3-sn-phosphoglycerides. This Naja mossambica (Mozambique spitting cobra) protein is Basic phospholipase A2 CM-II.